We begin with the raw amino-acid sequence, 90 residues long: DNA-binding protein HU (90 aa).

Residues 57 to 90 (ARKGVNPQTRKPITIPERKVPKFKPGKALKEKVK) form a disordered region.

It belongs to the bacterial histone-like protein family.

Functionally, histone-like DNA-binding protein which is capable of wrapping DNA to stabilize it, and thus to prevent its denaturation under extreme environmental conditions. In Thermotoga maritima (strain ATCC 43589 / DSM 3109 / JCM 10099 / NBRC 100826 / MSB8), this protein is DNA-binding protein HU (hup).